A 268-amino-acid polypeptide reads, in one-letter code: Tryptophan synthase alpha chain (268 aa).

Residues E49 and D60 each act as proton acceptor in the active site.

It belongs to the TrpA family. As to quaternary structure, tetramer of two alpha and two beta chains.

The enzyme catalyses (1S,2R)-1-C-(indol-3-yl)glycerol 3-phosphate + L-serine = D-glyceraldehyde 3-phosphate + L-tryptophan + H2O. The protein operates within amino-acid biosynthesis; L-tryptophan biosynthesis; L-tryptophan from chorismate: step 5/5. The alpha subunit is responsible for the aldol cleavage of indoleglycerol phosphate to indole and glyceraldehyde 3-phosphate. The chain is Tryptophan synthase alpha chain from Shigella sonnei (strain Ss046).